The primary structure comprises 109 residues: Large ribosomal subunit protein uL24 (109 aa).

The protein belongs to the universal ribosomal protein uL24 family. As to quaternary structure, part of the 50S ribosomal subunit.

One of two assembly initiator proteins, it binds directly to the 5'-end of the 23S rRNA, where it nucleates assembly of the 50S subunit. Its function is as follows. One of the proteins that surrounds the polypeptide exit tunnel on the outside of the subunit. This chain is Large ribosomal subunit protein uL24, found in Desulforapulum autotrophicum (strain ATCC 43914 / DSM 3382 / VKM B-1955 / HRM2) (Desulfobacterium autotrophicum).